Consider the following 409-residue polypeptide: Na(+)/H(+) antiporter NhaA (409 aa).

11 consecutive transmembrane segments (helical) span residues 13-33 (SGGI…NTFL), 58-78 (LILW…GLEL), 93-113 (IALP…IFYL), 120-140 (FALG…LGIL), 153-173 (IFLM…IALF), 176-196 (SELS…LFAL), 216-236 (VAVL…AFFI), 256-276 (LHGW…AGIS), 279-299 (GVGL…GLFV), 326-346 (FIQL…SLFI), and 363-383 (LAIL…LKFS).

It belongs to the NhaA Na(+)/H(+) (TC 2.A.33) antiporter family.

It is found in the cell inner membrane. It catalyses the reaction Na(+)(in) + 2 H(+)(out) = Na(+)(out) + 2 H(+)(in). Functionally, na(+)/H(+) antiporter that extrudes sodium in exchange for external protons. This Campylobacter concisus (strain 13826) protein is Na(+)/H(+) antiporter NhaA.